We begin with the raw amino-acid sequence, 113 residues long: Nucleoid-associated protein SAV_4556 (113 aa).

This sequence belongs to the YbaB/EbfC family. In terms of assembly, homodimer.

It is found in the cytoplasm. It localises to the nucleoid. Binds to DNA and alters its conformation. May be involved in regulation of gene expression, nucleoid organization and DNA protection. This chain is Nucleoid-associated protein SAV_4556, found in Streptomyces avermitilis (strain ATCC 31267 / DSM 46492 / JCM 5070 / NBRC 14893 / NCIMB 12804 / NRRL 8165 / MA-4680).